The following is a 248-amino-acid chain: Undecaprenyl-diphosphatase (248 aa).

The next 8 membrane-spanning stretches (helical) occupy residues 4–24 (IVLGLIQGLTEFLPISSSGHL), 40–60 (FAFLHLATLAAIIVFVWKEIV), 74–94 (YSLVLKIIISTIPAAIFGFLF), 101–121 (SFSNLKIISFFFLVTAASLFV), 134–154 (ISYIDALIIGLFQMIAIFPGI), 174–194 (ALKYSFLMGIPVILGAGILET), 201–221 (SYILISGLVAFLSGLLSLLIL), and 228–248 (KKLKIFSYYCILIAIIAFFVG).

Belongs to the UppP family.

It is found in the cell inner membrane. The catalysed reaction is di-trans,octa-cis-undecaprenyl diphosphate + H2O = di-trans,octa-cis-undecaprenyl phosphate + phosphate + H(+). In terms of biological role, catalyzes the dephosphorylation of undecaprenyl diphosphate (UPP). Confers resistance to bacitracin. This chain is Undecaprenyl-diphosphatase, found in Thermosipho africanus (strain TCF52B).